Reading from the N-terminus, the 359-residue chain is DNA-directed RNA polymerase RPB3-11 homolog (359 aa).

This sequence in the N-terminal section; belongs to the archaeal RpoD/eukaryotic RPB3 RNA polymerase subunit family. It in the C-terminal section; belongs to the archaeal RpoL/eukaryotic RPB11/RPC19 RNA polymerase subunit family. Part of the viral DNA-directed RNA polymerase that consists of 8 polII-like subunits (RPB1, RPB2, RPB3, RPB5, RPB6, RPB7, RPB9, RPB10), a capping enzyme and a termination factor.

It localises to the host cytoplasm. The protein localises to the virion. Its function is as follows. Component of the DNA-directed RNA polymerase (RNAP) that catalyzes the transcription in the cytoplasm of viral DNA into RNA using the four ribonucleoside triphosphates as substrates. The chain is DNA-directed RNA polymerase RPB3-11 homolog from Ornithodoros (relapsing fever ticks).